The sequence spans 202 residues: Small ribosomal subunit protein uS4 (202 aa).

Positions 18-44 are disordered; sequence LPGLTRKSARREYPPGQHGQGRRKRSE. Residues 90–152 enclose the S4 RNA-binding domain; it reads MRLDNTVFRL…DRSRKLIEAN (63 aa).

The protein belongs to the universal ribosomal protein uS4 family. In terms of assembly, part of the 30S ribosomal subunit. Contacts protein S5. The interaction surface between S4 and S5 is involved in control of translational fidelity.

Its function is as follows. One of the primary rRNA binding proteins, it binds directly to 16S rRNA where it nucleates assembly of the body of the 30S subunit. Functionally, with S5 and S12 plays an important role in translational accuracy. The polypeptide is Small ribosomal subunit protein uS4 (Picosynechococcus sp. (strain ATCC 27264 / PCC 7002 / PR-6) (Agmenellum quadruplicatum)).